The sequence spans 461 residues: Homogentisate 1,2-dioxygenase (461 aa).

Residues histidine 341, glutamate 347, and histidine 377 each contribute to the Fe cation site.

This sequence belongs to the homogentisate dioxygenase family. Requires Fe cation as cofactor.

It catalyses the reaction homogentisate + O2 = 4-maleylacetoacetate + H(+). Its pathway is amino-acid degradation; L-phenylalanine degradation; acetoacetate and fumarate from L-phenylalanine: step 4/6. The polypeptide is Homogentisate 1,2-dioxygenase (HGO) (Arabidopsis thaliana (Mouse-ear cress)).